A 329-amino-acid chain; its full sequence is ADP-L-glycero-D-manno-heptose-6-epimerase (329 aa).

NADP(+) is bound by residues 10–11 (FI), 31–32 (DD), lysine 38, lysine 53, 74–78 (QGACS), and asparagine 91. Catalysis depends on tyrosine 138, which acts as the Proton acceptor. Lysine 142 is an NADP(+) binding site. Asparagine 167 provides a ligand contact to substrate. NADP(+) contacts are provided by valine 168 and lysine 176. The Proton acceptor role is filled by lysine 176. Substrate contacts are provided by residues arginine 178, histidine 185, 199–202 (FAGW), arginine 212, and tyrosine 291.

This sequence belongs to the NAD(P)-dependent epimerase/dehydratase family. HldD subfamily. Homopentamer. The cofactor is NADP(+).

The enzyme catalyses ADP-D-glycero-beta-D-manno-heptose = ADP-L-glycero-beta-D-manno-heptose. It participates in nucleotide-sugar biosynthesis; ADP-L-glycero-beta-D-manno-heptose biosynthesis; ADP-L-glycero-beta-D-manno-heptose from D-glycero-beta-D-manno-heptose 7-phosphate: step 4/4. It functions in the pathway bacterial outer membrane biogenesis; LPS core biosynthesis. In terms of biological role, catalyzes the interconversion between ADP-D-glycero-beta-D-manno-heptose and ADP-L-glycero-beta-D-manno-heptose via an epimerization at carbon 6 of the heptose. This is ADP-L-glycero-D-manno-heptose-6-epimerase from Bordetella parapertussis (strain 12822 / ATCC BAA-587 / NCTC 13253).